A 316-amino-acid chain; its full sequence is MLEEQYLNLERYVLENGHLKGDRTQTGTLSTFGYQMRFDLSEGFPLLTTKRVPFGLIKSELLWFLKGDTNIRYLLQHNNHIWDEWAFKKWVESDEYQGPDMTDFGHRSLTDPEFNELYKIEKQRFTEQILEDDTFSAKYGDLGNVYGSQWRAWKTSTGETIDQISNVIDMIKNNPNSRRMIVSAWNPEDVPTSALPPCHSLFQFYVADGKLSCQLYQRSGDIFLGIPFNIASYALLTELIAKATGLEVGEFIHTIGDAHIYSNHLDQVKEQLERTPRPAPKLKFKQVHDSIFDYEPGDIVVEGYDPHPTIKAPVAV.

DUMP is bound by residues R23 and 178–179; that span reads RR. Residue C198 is the Nucleophile of the active site. Residues 218–221, N229, and 259–261 each bind dUMP; these read RSGD and HIY. D221 serves as a coordination point for (6R)-5,10-methylene-5,6,7,8-tetrahydrofolate. A315 contributes to the (6R)-5,10-methylene-5,6,7,8-tetrahydrofolate binding site.

The protein belongs to the thymidylate synthase family. Bacterial-type ThyA subfamily. In terms of assembly, homodimer.

It localises to the cytoplasm. The catalysed reaction is dUMP + (6R)-5,10-methylene-5,6,7,8-tetrahydrofolate = 7,8-dihydrofolate + dTMP. It functions in the pathway pyrimidine metabolism; dTTP biosynthesis. Its function is as follows. Catalyzes the reductive methylation of 2'-deoxyuridine-5'-monophosphate (dUMP) to 2'-deoxythymidine-5'-monophosphate (dTMP) while utilizing 5,10-methylenetetrahydrofolate (mTHF) as the methyl donor and reductant in the reaction, yielding dihydrofolate (DHF) as a by-product. This enzymatic reaction provides an intracellular de novo source of dTMP, an essential precursor for DNA biosynthesis. This is Thymidylate synthase from Pediococcus pentosaceus (strain ATCC 25745 / CCUG 21536 / LMG 10740 / 183-1w).